Reading from the N-terminus, the 89-residue chain is Small ribosomal subunit protein uS15 (89 aa).

The span at 1–11 (MSITAERKAEV) shows a compositional bias: basic and acidic residues. Residues 1–24 (MSITAERKAEVIKTNAKKAGDTGS) are disordered.

The protein belongs to the universal ribosomal protein uS15 family. Part of the 30S ribosomal subunit. Forms a bridge to the 50S subunit in the 70S ribosome, contacting the 23S rRNA.

In terms of biological role, one of the primary rRNA binding proteins, it binds directly to 16S rRNA where it helps nucleate assembly of the platform of the 30S subunit by binding and bridging several RNA helices of the 16S rRNA. Forms an intersubunit bridge (bridge B4) with the 23S rRNA of the 50S subunit in the ribosome. This chain is Small ribosomal subunit protein uS15, found in Afipia carboxidovorans (strain ATCC 49405 / DSM 1227 / KCTC 32145 / OM5) (Oligotropha carboxidovorans).